The following is a 229-amino-acid chain: MAVSFTNVSSEAGLKKLDEYLLTRSYISGYQASNDDLAVYSAFSTAPSSSYTNVARWFTHIDALLRLSGVTADGQGVKVESTAVPSASTPDVADAKAPAADDDDDDDVDLFGEETEEEKKAAEERAAAVKASGKKKESGKSSVLLDVKPWDDETDMTKLEEAVRNVKMEGLLWGASKLVPVGYGIKKLQIMMTIVDDLVSVDSLIEDYFYTEPANEYIQSCDIVAFNKI.

Positions 80–109 (ESTAVPSASTPDVADAKAPAADDDDDDDVD) are disordered. Acidic residues predominate over residues 100–109 (ADDDDDDDVD).

The protein belongs to the EF-1-beta/EF-1-delta family. In terms of assembly, EF-1 is composed of 4 subunits: alpha, beta (1B-alpha=beta'), delta (1B-beta), and gamma (1B-gamma).

In terms of biological role, EF-1-beta and EF-1-beta' stimulate the exchange of GDP bound to EF-1-alpha to GTP. This Oryza sativa subsp. japonica (Rice) protein is Elongation factor 1-delta 1.